The chain runs to 251 residues: Hydroxyacylglutathione hydrolase (251 aa).

Residues His53, His55, Asp57, His58, His110, Asp127, and His165 each coordinate Zn(2+).

This sequence belongs to the metallo-beta-lactamase superfamily. Glyoxalase II family. As to quaternary structure, monomer. Zn(2+) is required as a cofactor.

It carries out the reaction an S-(2-hydroxyacyl)glutathione + H2O = a 2-hydroxy carboxylate + glutathione + H(+). The protein operates within secondary metabolite metabolism; methylglyoxal degradation; (R)-lactate from methylglyoxal: step 2/2. Its function is as follows. Thiolesterase that catalyzes the hydrolysis of S-D-lactoyl-glutathione to form glutathione and D-lactic acid. This chain is Hydroxyacylglutathione hydrolase, found in Salmonella arizonae (strain ATCC BAA-731 / CDC346-86 / RSK2980).